The sequence spans 218 residues: Heart- and neural crest derivatives-expressed protein 1 (218 aa).

3 disordered regions span residues 1-23 (MNLV…HPAH), 56-112 (APDF…RTES), and 172-203 (ADGG…RIKG). Residues 8 to 21 (AHHHHHHHHHHPHP) show a composition bias toward basic residues. Residues 68–92 (AAAAAASYGPDARPGQSPGRLEALG) show a composition bias toward low complexity. Residues 95-107 (LGRRKGSGPKKER) are compositionally biased toward basic residues. One can recognise a bHLH domain in the interval 97 to 149 (RRKGSGPKKERRRTESINSAFAELRECIPNVPADTKLSKIKTLRLATSYIAYL). T110 bears the Phosphothreonine; by PLK4 mark. S112 is subject to Phosphoserine; by PLK4.

Efficient DNA binding requires dimerization with another bHLH protein. Forms homodimers and heterodimers with TCF3 gene products E12 and E47, HAND2 and HEY1, HEY2 and HEYL (hairy-related transcription factors). Interacts with MDFIC. Interacts with SOX15; the interaction enhances HAND1-induced differentiation of trophoblast giant cells. In terms of processing, phosphorylation by PLK4 disrupts the interaction with MDFIC and leads to translocation into the nucleoplasm, allowing dimerization and transcription factor activity.

It localises to the nucleus. The protein localises to the nucleoplasm. Its subcellular location is the nucleolus. In terms of biological role, transcription factor that plays an essential role in both trophoblast giant cell differentiation and in cardiac morphogenesis. Binds the DNA sequence 5'-NRTCTG-3' (non-canonical E-box). Acts as a transcriptional repressor of SOX15. In the adult, could be required for ongoing expression of cardiac-specific genes. This is Heart- and neural crest derivatives-expressed protein 1 (HAND1) from Bos taurus (Bovine).